Consider the following 586-residue polypeptide: Cryptochrome-1 (586 aa).

The Photolyase/cryptochrome alpha/beta domain maps to 3–132; it reads VNAVHWFRKG…EVIVRISHTL (130 aa). Residue Lys11 forms a Glycyl lysine isopeptide (Lys-Gly) (interchain with G-Cter in ubiquitin) linkage. The short motif at 50 to 54 is the LIR 1 element; it reads NRWRF. Ser71 carries the phosphoserine; by AMPK modification. The LIR 2 motif lies at 82-87; that stretch reads DVFPRL. Lys107 participates in a covalent cross-link: Glycyl lysine isopeptide (Lys-Gly) (interchain with G-Cter in ubiquitin). Positions 151–156 match the LIR 3 motif; sequence KRFQTL. Residue Lys159 forms a Glycyl lysine isopeptide (Lys-Gly) (interchain with G-Cter in ubiquitin) linkage. The residue at position 247 (Ser247) is a Phosphoserine; by MAPK. Ser252 contributes to the FAD binding site. 2 consecutive short sequence motifs (LIR) follow at residues 255–260 and 271–276; these read LRFGCL and DLYKKV. Ser280 carries the phosphoserine; by AMPK modification. The short motif at 285 to 290 is the LIR 6 element; that stretch reads SLYGQL. Gln289 contributes to the FAD binding site. Lys329 participates in a covalent cross-link: Glycyl lysine isopeptide (Lys-Gly) (interchain with G-Cter in ubiquitin). Positions 335–339 match the LIR 7 motif; the sequence is TGFPW. His355 contributes to the FAD binding site. Positions 371–470 are required for inhibition of CLOCK-BMAL1-mediated transcription; the sequence is WISWEEGMKV…LIGINYPKPM (100 aa). Residues 379 to 384 carry the LIR 8 motif; sequence KVFEEL. An FAD-binding site is contributed by 387-389; sequence DAD. 3 consecutive short sequence motifs (LIR) follow at residues 395–400, 411–416, and 430–435; these read GSWMWL, HCYCPV, and RRYLPV. The interaction with TIMELESS stretch occupies residues 471–493; it reads VNHAEASRLNIERMKQIYQQLSR. Lys485 is covalently cross-linked (Glycyl lysine isopeptide (Lys-Gly) (interchain with G-Cter in ubiquitin)). Short sequence motifs (LIR) lie at residues 486–491 and 492–497; these read QIYQQL and SRYRGL. Positions 545 to 559 are enriched in polar residues; it reads QQTHLLKQGRSSMGT. A disordered region spans residues 545–586; that stretch reads QQTHLLKQGRSSMGTGLSGGKRPSQEEDTQSIGPKVQRQSTN. Lys565 is covalently cross-linked (Glycyl lysine isopeptide (Lys-Gly) (interchain with G-Cter in ubiquitin)). A Phosphoserine modification is found at Ser568.

This sequence belongs to the DNA photolyase class-1 family. As to quaternary structure, component of the circadian core oscillator, which includes the CRY proteins, CLOCK or NPAS2, BMAL1 or BMAL2, CSNK1D and/or CSNK1E, TIMELESS, and the PER proteins. Interacts directly with TIMELESS. Interacts directly with PER1, PER2 and PER3; interaction with PER2 inhibits its ubiquitination and vice versa. Interacts with FBXL21. Interacts with FBXL3. Interacts with CLOCK-BMAL1 independently of PER2 and DNA. Interacts with HDAC1, HDAC2 and SIN3B. Interacts with nuclear receptors AR, NR1D1, NR3C1/GR, RORA and RORC; the interaction with at least NR3C1/GR is ligand dependent. Interacts with PRKDC. Interacts with the G protein subunit alpha GNAS; the interaction may block GPCR-mediated regulation of cAMP concentrations. Interacts with PRMT5. Interacts with EZH2. Interacts with MYBBP1A, DOCK7, HNRNPU, RPL7A, RPL8 and RPS3. Interacts with PPP5C (via TPR repeats). Interacts with MAP1LC3B. Interacts with CLOCK. Interacts with BMAL1. Interacts weakly with HDAC3; this interaction is enhanced in the presence of FBXL3. Interacts with TRIM28, KCTD5 and DDB1. Interacts with FOXO1. Interacts with DTL and DDB1-CUL4A complex. Interacts with HNF4A. Interacts with PSMD2 in a KDM8-dependent manner. Interacts with KDM8 in a FBXL3-dependent manner. Interacts with PPARG in a ligand-dependent manner. Interacts with PPARD (via domain NR LBD) and NR1I2 (via domain NR LBD) in a ligand-dependent manner. Interacts with PPARA, NR1I3 and VDR. It depends on FAD as a cofactor. (6R)-5,10-methylene-5,6,7,8-tetrahydrofolate is required as a cofactor. Post-translationally, phosphorylation on Ser-247 by MAPK is important for the inhibition of CLOCK-BMAL1-mediated transcriptional activity. Phosphorylation by CSNK1E requires interaction with PER1 or PER2. Phosphorylation at Ser-71 and Ser-280 by AMPK decreases protein stability. Phosphorylation at Ser-568 exhibits a robust circadian rhythm with a peak at CT8, increases protein stability, prevents SCF(FBXL3)-mediated degradation and is antagonized by interaction with PRKDC. In terms of processing, ubiquitinated by the SCF(FBXL3) and SCF(FBXL21) complexes, regulating the balance between degradation and stabilization. The SCF(FBXL3) complex is mainly nuclear and mediates ubiquitination and subsequent degradation of CRY1. In contrast, cytoplasmic SCF(FBXL21) complex-mediated ubiquitination leads to stabilize CRY1 and counteract the activity of the SCF(FBXL3) complex. The SCF(FBXL3) and SCF(FBXL21) complexes probably mediate ubiquitination at different Lys residues. Ubiquitination at Lys-11 and Lys-107 are specifically ubiquitinated by the SCF(FBXL21) complex but not by the SCF(FBXL3) complex. Ubiquitination may be inhibited by PER2. Deubiquitinated by USP7. Undergoes autophagy-mediated degradation in the liver in a time-dependent manner. Autophagic degradation of CRY1 (an inhibitor of gluconeogenesis) occurs during periods of reduced feeding allowing induction of gluconeogenesis and maintenance of blood glucose levels.

Its subcellular location is the cytoplasm. The protein resides in the nucleus. Functionally, transcriptional repressor which forms a core component of the circadian clock. The circadian clock, an internal time-keeping system, regulates various physiological processes through the generation of approximately 24 hour circadian rhythms in gene expression, which are translated into rhythms in metabolism and behavior. It is derived from the Latin roots 'circa' (about) and 'diem' (day) and acts as an important regulator of a wide array of physiological functions including metabolism, sleep, body temperature, blood pressure, endocrine, immune, cardiovascular, and renal function. Consists of two major components: the central clock, residing in the suprachiasmatic nucleus (SCN) of the brain, and the peripheral clocks that are present in nearly every tissue and organ system. Both the central and peripheral clocks can be reset by environmental cues, also known as Zeitgebers (German for 'timegivers'). The predominant Zeitgeber for the central clock is light, which is sensed by retina and signals directly to the SCN. The central clock entrains the peripheral clocks through neuronal and hormonal signals, body temperature and feeding-related cues, aligning all clocks with the external light/dark cycle. Circadian rhythms allow an organism to achieve temporal homeostasis with its environment at the molecular level by regulating gene expression to create a peak of protein expression once every 24 hours to control when a particular physiological process is most active with respect to the solar day. Transcription and translation of core clock components (CLOCK, NPAS2, BMAL1, BMAL2, PER1, PER2, PER3, CRY1 and CRY2) plays a critical role in rhythm generation, whereas delays imposed by post-translational modifications (PTMs) are important for determining the period (tau) of the rhythms (tau refers to the period of a rhythm and is the length, in time, of one complete cycle). A diurnal rhythm is synchronized with the day/night cycle, while the ultradian and infradian rhythms have a period shorter and longer than 24 hours, respectively. Disruptions in the circadian rhythms contribute to the pathology of cardiovascular diseases, cancer, metabolic syndromes and aging. A transcription/translation feedback loop (TTFL) forms the core of the molecular circadian clock mechanism. Transcription factors, CLOCK or NPAS2 and BMAL1 or BMAL2, form the positive limb of the feedback loop, act in the form of a heterodimer and activate the transcription of core clock genes and clock-controlled genes (involved in key metabolic processes), harboring E-box elements (5'-CACGTG-3') within their promoters. The core clock genes: PER1/2/3 and CRY1/2 which are transcriptional repressors form the negative limb of the feedback loop and interact with the CLOCK|NPAS2-BMAL1|BMAL2 heterodimer inhibiting its activity and thereby negatively regulating their own expression. This heterodimer also activates nuclear receptors NR1D1/2 and RORA/B/G, which form a second feedback loop and which activate and repress BMAL1 transcription, respectively. CRY1 and CRY2 have redundant functions but also differential and selective contributions at least in defining the pace of the SCN circadian clock and its circadian transcriptional outputs. More potent transcriptional repressor in cerebellum and liver than CRY2, though more effective in lengthening the period of the SCN oscillator. On its side, CRY2 seems to play a critical role in tuning SCN circadian period by opposing the action of CRY1. With CRY2, is dispensable for circadian rhythm generation but necessary for the development of intercellular networks for rhythm synchrony. Capable of translocating circadian clock core proteins such as PER proteins to the nucleus. Interacts with CLOCK-BMAL1 independently of PER proteins and is found at CLOCK-BMAL1-bound sites, suggesting that CRY may act as a molecular gatekeeper to maintainCLOCK-BMAL1 in a poised and repressed state until the proper time for transcriptional activation. Represses the CLOCK-BMAL1 induced transcription of BHLHE40/DEC1, ATF4, MTA1, KLF10 and NAMPT. May repress circadian target genes expression in collaboration with HDAC1 and HDAC2 through histone deacetylation. Mediates the clock-control activation of ATR and modulates ATR-mediated DNA damage checkpoint. In liver, mediates circadian regulation of cAMP signaling and gluconeogenesis by binding to membrane-coupled G proteins and blocking glucagon-mediated increases in intracellular cAMP concentrations and CREB1 phosphorylation. Inhibits hepatic gluconeogenesis by decreasing nuclear FOXO1 levels that down-regulates gluconeogenic gene expression. Besides its role in the maintenance of the circadian clock, is also involved in the regulation of other processes. Represses glucocorticoid receptor NR3C1/GR-induced transcriptional activity by binding to glucocorticoid response elements (GREs). Plays a key role in glucose and lipid metabolism modulation, in part, through the transcriptional regulation of genes involved in these pathways, such as LEP or ACSL4. Represses PPARD and its target genes in the skeletal muscle and limits exercise capacity. Plays an essential role in the generation of circadian rhythms in the retina. Represses the transcriptional activity of NR1I2. In Macaca fascicularis (Crab-eating macaque), this protein is Cryptochrome-1 (CRY1).